The following is a 160-amino-acid chain: Phosphopantetheine adenylyltransferase (160 aa).

Substrate is bound at residue serine 10. ATP-binding positions include 10-11 (SF) and histidine 18. Substrate is bound by residues lysine 42, leucine 74, and arginine 88. Residues 89 to 91 (GLR), glutamate 99, and 124 to 130 (YSFLSSS) each bind ATP.

It belongs to the bacterial CoaD family. Homohexamer. It depends on Mg(2+) as a cofactor.

It localises to the cytoplasm. The enzyme catalyses (R)-4'-phosphopantetheine + ATP + H(+) = 3'-dephospho-CoA + diphosphate. The protein operates within cofactor biosynthesis; coenzyme A biosynthesis; CoA from (R)-pantothenate: step 4/5. In terms of biological role, reversibly transfers an adenylyl group from ATP to 4'-phosphopantetheine, yielding dephospho-CoA (dPCoA) and pyrophosphate. This is Phosphopantetheine adenylyltransferase from Bacillus pumilus (strain SAFR-032).